A 260-amino-acid polypeptide reads, in one-letter code: Myb transcription factor 42 (260 aa).

2 consecutive HTH myb-type domains span residues 9-61 (KAHT…INYL) and 62-116 (RPDL…RRKL). DNA-binding regions (H-T-H motif) lie at residues 37 to 61 (WRSL…INYL) and 89 to 112 (WSLI…NTHI).

In terms of tissue distribution, mainly expressed in the aerial parts and, to a lower extent, in roots.

It is found in the nucleus. In terms of biological role, transcription factor that negatively regulates the expression of caffeic acid O-methyl-transferase genes (COMTs) and of other genes involved in the biosynthesis of lignin, thus preventing lignification. This Zea mays (Maize) protein is Myb transcription factor 42.